We begin with the raw amino-acid sequence, 144 residues long: Transcription antitermination protein NusB (144 aa).

Belongs to the NusB family.

In terms of biological role, involved in transcription antitermination. Required for transcription of ribosomal RNA (rRNA) genes. Binds specifically to the boxA antiterminator sequence of the ribosomal RNA (rrn) operons. This chain is Transcription antitermination protein NusB, found in Haemophilus influenzae (strain PittGG).